The sequence spans 241 residues: Zinc finger CCHC domain-containing protein 17 (241 aa).

Residues 16-88 (YTIFQGEVAM…DRIKVSLSMK (73 aa)) enclose the S1 motif domain. Serine 114 is subject to Phosphoserine. The CCHC-type zinc finger occupies 131 to 148 (TTCKKCGCKGHFAKDCFM). Lysine 144 carries the post-translational modification N6-acetyllysine. Residues 161-241 (EEEEKEEAKS…KKKHKKKHKE (81 aa)) form a disordered region. Positions 166-178 (EEAKSAEFEKPDP) are enriched in basic and acidic residues. Basic residues predominate over residues 182–198 (PSRKRKKEKKKKKHRDR). Residue serine 183 is modified to Phosphoserine. The span at 211 to 225 (DTGKRARHTSKDSKA) shows a compositional bias: basic and acidic residues. Residues 226–241 (AKKKKKKKKHKKKHKE) are compositionally biased toward basic residues.

Interacts with PNN. Associates with the 60S ribosomal subunit.

Its subcellular location is the nucleus. It localises to the nucleolus. The sequence is that of Zinc finger CCHC domain-containing protein 17 (ZCCHC17) from Homo sapiens (Human).